The primary structure comprises 509 residues: ATP synthase subunit alpha (509 aa).

171–178 (GDRQTGKT) serves as a coordination point for ATP.

This sequence belongs to the ATPase alpha/beta chains family. In terms of assembly, F-type ATPases have 2 components, CF(1) - the catalytic core - and CF(0) - the membrane proton channel. CF(1) has five subunits: alpha(3), beta(3), gamma(1), delta(1), epsilon(1). CF(0) has three main subunits: a(1), b(2) and c(9-12). The alpha and beta chains form an alternating ring which encloses part of the gamma chain. CF(1) is attached to CF(0) by a central stalk formed by the gamma and epsilon chains, while a peripheral stalk is formed by the delta and b chains.

Its subcellular location is the cell inner membrane. The enzyme catalyses ATP + H2O + 4 H(+)(in) = ADP + phosphate + 5 H(+)(out). Produces ATP from ADP in the presence of a proton gradient across the membrane. The alpha chain is a regulatory subunit. The sequence is that of ATP synthase subunit alpha from Neorickettsia sennetsu (strain ATCC VR-367 / Miyayama) (Ehrlichia sennetsu).